The primary structure comprises 156 residues: D-aminoacyl-tRNA deacylase (156 aa).

A Gly-cisPro motif, important for rejection of L-amino acids motif is present at residues Gly142–Pro143.

The protein belongs to the DTD family. Homodimer.

It is found in the cytoplasm. The catalysed reaction is glycyl-tRNA(Ala) + H2O = tRNA(Ala) + glycine + H(+). The enzyme catalyses a D-aminoacyl-tRNA + H2O = a tRNA + a D-alpha-amino acid + H(+). Functionally, an aminoacyl-tRNA editing enzyme that deacylates mischarged D-aminoacyl-tRNAs. Also deacylates mischarged glycyl-tRNA(Ala), protecting cells against glycine mischarging by AlaRS. Acts via tRNA-based rather than protein-based catalysis; rejects L-amino acids rather than detecting D-amino acids in the active site. By recycling D-aminoacyl-tRNA to D-amino acids and free tRNA molecules, this enzyme counteracts the toxicity associated with the formation of D-aminoacyl-tRNA entities in vivo and helps enforce protein L-homochirality. The protein is D-aminoacyl-tRNA deacylase of Cupriavidus pinatubonensis (strain JMP 134 / LMG 1197) (Cupriavidus necator (strain JMP 134)).